The primary structure comprises 193 residues: Segregation and condensation protein B (193 aa).

Belongs to the ScpB family. Homodimer. Homodimerization may be required to stabilize the binding of ScpA to the Smc head domains. Component of a cohesin-like complex composed of ScpA, ScpB and the Smc homodimer, in which ScpA and ScpB bind to the head domain of Smc. The presence of the three proteins is required for the association of the complex with DNA.

Its subcellular location is the cytoplasm. In terms of biological role, participates in chromosomal partition during cell division. May act via the formation of a condensin-like complex containing Smc and ScpA that pull DNA away from mid-cell into both cell halves. In Shouchella clausii (strain KSM-K16) (Alkalihalobacillus clausii), this protein is Segregation and condensation protein B.